We begin with the raw amino-acid sequence, 330 residues long: MFFIIHSLVTSVFLTALGPQNRTMHFVTEFVLLGFHGQREMQSCFFSFILVLYLLTLLGNGAIVCAVKLDRRLHTPMYILLGNFAFLEIWYISSTVPNMLVNILSEIKTISFSGCFLQFYFFFSLGTTECFFLSVMAYDRYLAICRPLHYPSIMTGKFCIILVCVCWVGGFLCYPVPIVLISQLPFCGPNIIDHLVCDPGPLFALACISAPSTELICYTFNSMIIFGPFLSILGSYTLVIRAVLCIPSGAGRTKAFSTCGSHLMVVSLFYGTLMVMYVSPTSGNPAGMQKIITLVYTAMTPFLNPLIYSLRNKDMKDALKRVLGLTVSQN.

Residues M1 to S43 lie on the Extracellular side of the membrane. N21 is a glycosylation site (N-linked (GlcNAc...) asparagine). Residues C44–V64 form a helical membrane-spanning segment. Over C65 to R72 the chain is Cytoplasmic. A helical membrane pass occupies residues L73–S93. Residues S94–L117 lie on the Extracellular side of the membrane. C115 and C207 are oxidised to a cystine. Residues Q118 to Y138 form a helical membrane-spanning segment. The Cytoplasmic portion of the chain corresponds to D139–K157. The chain crosses the membrane as a helical span at residues F158–I178. The Extracellular portion of the chain corresponds to V179–L215. The chain crosses the membrane as a helical span at residues I216–S235. Topologically, residues Y236–A255 are cytoplasmic. The helical transmembrane segment at F256–M276 threads the bilayer. Topologically, residues Y277–Q289 are extracellular. Residues K290–L310 form a helical membrane-spanning segment. The Cytoplasmic segment spans residues R311–N330.

This sequence belongs to the G-protein coupled receptor 1 family.

The protein localises to the cell membrane. In terms of biological role, odorant receptor. This is Olfactory receptor 11H6 (OR11H6) from Homo sapiens (Human).